Reading from the N-terminus, the 56-residue chain is Large ribosomal subunit protein bL32 (56 aa).

The segment at 1–26 (MAVQKSKVTRSRRGQRRSHDALTAAA) is disordered. The span at 7-16 (KVTRSRRGQR) shows a compositional bias: basic residues.

Belongs to the bacterial ribosomal protein bL32 family.

The sequence is that of Large ribosomal subunit protein bL32 (rpmF) from Moritella marina (Vibrio marinus).